Reading from the N-terminus, the 150-residue chain is Group IIC secretory phospholipase A2 (150 aa).

The signal sequence occupies residues 1–20 (MKGIAIFLVFIFYWTTSTLS). Cystine bridges form between C46-C143, C48-C64, C63-C121, C69-C150, C70-C114, C79-C107, C97-C112, and C99-C105. Ca(2+)-binding residues include Y47, G49, and G51. H67 is a catalytic residue. D68 contributes to the Ca(2+) binding site. N-linked (GlcNAc...) asparagine glycosylation occurs at N92. Residue D115 is part of the active site.

Belongs to the phospholipase A2 family. The cofactor is Ca(2+). As to expression, testis specific.

The protein resides in the secreted. The catalysed reaction is a 1,2-diacyl-sn-glycero-3-phosphocholine + H2O = a 1-acyl-sn-glycero-3-phosphocholine + a fatty acid + H(+). Functionally, PA2 catalyzes the calcium-dependent hydrolysis of the 2-acyl groups in 3-sn-phosphoglycerides. Testis PA2 may be important in the production of prostaglandins, by the release of arachidonic acid, which in turn are necessary for the contractions of the seminiferous tubules and the testicular capsule; they also seem to decrease sperm transit time through the male reproductive tract. This chain is Group IIC secretory phospholipase A2 (Pla2g2c), found in Mus musculus (Mouse).